Reading from the N-terminus, the 794-residue chain is MDELAGGGGGQGMAVPPRPQQGPGGNLSLPPGANGAPGGGGPPAAETAGPPAGPELSRPQQYTIPGILHYIQHEWARFEMERAHWEVERAELQARIAFLQGERKGQENLKKDLVRRIKMLEYALKQERAKYHKLKYGTELNQGDLKMPTFESEETKDAEAPPAQNSQLTWKQGRQLLRQYLQEVGYTDTILDVRSQRVRSLLGLSNSEPNGSIEAKNLEQILNGGESPKQKGQEIKRPSGDVLETFNFLENADDSDEEENDMIEGIPEGKDKLRIHKHKIGNEGLAADLTDDPDTEEALKEFDFLVTAEDGEGAGEARSSGDGTEWDKDDLSPTAEVWDVDQGLMSKLKEQYKKERKGKRGAKRVNRTNLCDMITDLGDDELPHIPSGIINQSRSASTRMTDHEGSRAEEAEPITFPSGGGKSFIMGSDDVLLSVLGLGDLADLTVTNDADYSYDLPANKDALRKTWNPKYTLRSHFDGVRALAFHPVEPVLVTASEDHTLKLWNLQKTVPAKKSASLDVEPIYTFRAHIGPVLSLAISSNGEQCFSGGIDATIQWWNMPSPNVDPYDTYESHVLAGTLVAHTDAVWGLAYSGIKNQLLSCSADGTIRLWNPQEKLPCICTYNGDKEHGIPTSVDFIGCDPAHMVTSFNTGSAIIYDLETSQSLVMLSSQVDSGLQSSNHINRVVSHPTLPVTITAHEDRHIKFFDNKTGKMIHSMVAHLDAVTSLAVDPNGIYLMSGSHDCSIRLWNLDSKTCVQEITAHRKKLDESIYDVAFHPSKAYIASAGADALAKVFV.

Residue methionine 1 is modified to N-acetylmethionine. A compositionally biased stretch (gly residues) spans 1-12; that stretch reads MDELAGGGGGQG. A disordered region spans residues 1-59; the sequence is MDELAGGGGGQGMAVPPRPQQGPGGNLSLPPGANGAPGGGGPPAAETAGPPAGPELSRP. The caveolin-binding stretch occupies residues 70 to 78; it reads YIQHEWARF. Residues 76–135 are a coiled coil; the sequence is ARFEMERAHWEVERAELQARIAFLQGERKGQENLKKDLVRRIKMLEYALKQERAKYHKLK. Threonine 149 carries the phosphothreonine modification. The calmodulin-binding stretch occupies residues 164 to 181; the sequence is QNSQLTWKQGRQLLRQYL. 5 positions are modified to phosphoserine: serine 200, serine 212, serine 227, serine 255, and serine 332. The tract at residues 309-339 is disordered; it reads EDGEGAGEARSSGDGTEWDKDDLSPTAEVWD. WD repeat units lie at residues 475 to 514, 528 to 567, 581 to 620, 676 to 715, 718 to 757, and 764 to 794; these read SHFDGVRALAFHPVEPVLVTASEDHTLKLWNLQKTVPAKK, AHIGPVLSLAISSNGEQCFSGGIDATIQWWNMPSPNVDPY, AHTDAVWGLAYSGIKNQLLSCSADGTIRLWNPQEKLPCIC, QSSNHINRVVSHPTLPVTITAHEDRHIKFFDNKTGKMIHS, AHLDAVTSLAVDPNGIYLMSGSHDCSIRLWNLDSKTCVQE, and KLDESIYDVAFHPSKAYIASAGADALAKVFV.

This sequence belongs to the WD repeat striatin family. In terms of assembly, tetramerizes. Part of the core of STRIPAK complexes composed of PP2A catalytic and scaffolding subunits, the striatins (PP2A regulatory subunits), the striatin-associated proteins MOB4, STRIP1 and STRIP2, PDCD10 and members of the STE20 kinases, such as STK24 and STK26. The STRIPAK complex can be extended by adapter proteins such as SLMAP:SIKE1 or CTTNBP2NL. Interacts with CDC42BPB.

The protein resides in the cytoplasm. Its subcellular location is the membrane. Its function is as follows. Calmodulin-binding scaffolding protein which is the center of the striatin-interacting phosphatase and kinase (STRIPAK) complexes. STRIPAK complexes have critical roles in protein (de)phosphorylation and are regulators of multiple signaling pathways including Hippo, MAPK, nuclear receptor and cytoskeleton remodeling. Different types of STRIPAK complexes are involved in a variety of biological processes such as cell growth, differentiation, apoptosis, metabolism and immune regulation. The sequence is that of Striatin-3 (Strn3) from Rattus norvegicus (Rat).